The sequence spans 545 residues: Hsk1-interacting molecule 1 (545 aa).

The DBF4-type zinc finger occupies 492 to 541; it reads VDAKPGYCENCREKFDNFESHIRSSRHRRFAENNDNFKDLDELFALVQRP. Zn(2+) is bound by residues Cys499, Cys502, His512, and His518.

Associates with hsk1. Interacts with mcm10. Hyperphosphorylated at the G1/S and S-phases of the cell cycle.

The protein localises to the nucleus. Functionally, activates hsk1 kinase and is essential for G1/S transition. Has a role in S-phase checkpoint control induced by replication fork blocks after nucleotide deprivation and DNA damage. The protein is Hsk1-interacting molecule 1 (him1) of Schizosaccharomyces pombe (strain 972 / ATCC 24843) (Fission yeast).